Here is a 201-residue protein sequence, read N- to C-terminus: MPAIESGLWALILTGVLGYLLGSIPFGIVITRALGLGDLRKIGSGNIGATNVLRTGNKPAALATLLLDSGKGAIAVLIARAAVGEDAAQLAAFTSFLGHLFPVWLGFRGGKGVATFLGTLLALAWPVGLACCLTWLATAALGRISSLSALVAAASGVLWMILLGYGQMAALGAVLAVLIFIRHHANIRRILAGTEPRIGKK.

5 consecutive transmembrane segments (helical) span residues A10–I30, P59–A79, A87–F107, F116–L136, and I161–I181.

It belongs to the PlsY family. As to quaternary structure, probably interacts with PlsX.

Its subcellular location is the cell inner membrane. It carries out the reaction an acyl phosphate + sn-glycerol 3-phosphate = a 1-acyl-sn-glycero-3-phosphate + phosphate. Its pathway is lipid metabolism; phospholipid metabolism. Catalyzes the transfer of an acyl group from acyl-phosphate (acyl-PO(4)) to glycerol-3-phosphate (G3P) to form lysophosphatidic acid (LPA). This enzyme utilizes acyl-phosphate as fatty acyl donor, but not acyl-CoA or acyl-ACP. This Cereibacter sphaeroides (strain ATCC 17029 / ATH 2.4.9) (Rhodobacter sphaeroides) protein is Glycerol-3-phosphate acyltransferase.